We begin with the raw amino-acid sequence, 379 residues long: Queuine tRNA-ribosyltransferase (379 aa).

Asp94 functions as the Proton acceptor in the catalytic mechanism. Substrate is bound by residues 94-98 (DSGGF), Asp148, Gln191, and Gly218. The interval 249–255 (GVGSPDS) is RNA binding. Asp268 serves as the catalytic Nucleophile. The tract at residues 273–277 (TRIAR) is RNA binding; important for wobble base 34 recognition. Zn(2+) is bound by residues Cys306, Cys308, Cys311, and His337.

The protein belongs to the queuine tRNA-ribosyltransferase family. In terms of assembly, homodimer. Within each dimer, one monomer is responsible for RNA recognition and catalysis, while the other monomer binds to the replacement base PreQ1. Zn(2+) is required as a cofactor.

It catalyses the reaction 7-aminomethyl-7-carbaguanine + guanosine(34) in tRNA = 7-aminomethyl-7-carbaguanosine(34) in tRNA + guanine. Its pathway is tRNA modification; tRNA-queuosine biosynthesis. Its function is as follows. Catalyzes the base-exchange of a guanine (G) residue with the queuine precursor 7-aminomethyl-7-deazaguanine (PreQ1) at position 34 (anticodon wobble position) in tRNAs with GU(N) anticodons (tRNA-Asp, -Asn, -His and -Tyr). Catalysis occurs through a double-displacement mechanism. The nucleophile active site attacks the C1' of nucleotide 34 to detach the guanine base from the RNA, forming a covalent enzyme-RNA intermediate. The proton acceptor active site deprotonates the incoming PreQ1, allowing a nucleophilic attack on the C1' of the ribose to form the product. After dissociation, two additional enzymatic reactions on the tRNA convert PreQ1 to queuine (Q), resulting in the hypermodified nucleoside queuosine (7-(((4,5-cis-dihydroxy-2-cyclopenten-1-yl)amino)methyl)-7-deazaguanosine). The polypeptide is Queuine tRNA-ribosyltransferase (Halalkalibacterium halodurans (strain ATCC BAA-125 / DSM 18197 / FERM 7344 / JCM 9153 / C-125) (Bacillus halodurans)).